We begin with the raw amino-acid sequence, 428 residues long: Pyruvate kinase (428 aa).

Substrate is bound at residue arginine 34. The K(+) site is built by asparagine 36, serine 38, aspartate 68, and threonine 69. Residue 36-39 (NFSH) coordinates ATP. 2 residues coordinate ATP: arginine 75 and lysine 152. Glutamate 214 serves as a coordination point for Mg(2+). Glycine 237, aspartate 238, and threonine 270 together coordinate substrate. A Mg(2+)-binding site is contributed by aspartate 238.

The protein belongs to the pyruvate kinase family. Homotetramer. It depends on Mg(2+) as a cofactor. Requires K(+) as cofactor.

It carries out the reaction pyruvate + ATP = phosphoenolpyruvate + ADP + H(+). It participates in carbohydrate degradation; glycolysis; pyruvate from D-glyceraldehyde 3-phosphate: step 5/5. This Encephalitozoon cuniculi (strain GB-M1) (Microsporidian parasite) protein is Pyruvate kinase (PYK1).